The chain runs to 242 residues: UDP-2,3-diacylglucosamine hydrolase (242 aa).

Positions 8, 10, 41, 79, and 114 each coordinate Mn(2+). 79–80 (NR) lines the substrate pocket. 4 residues coordinate substrate: aspartate 122, lysine 164, lysine 167, and histidine 195. Mn(2+)-binding residues include histidine 195 and histidine 197.

Belongs to the LpxH family. The cofactor is Mn(2+).

The protein localises to the cell inner membrane. It carries out the reaction UDP-2-N,3-O-bis[(3R)-3-hydroxytetradecanoyl]-alpha-D-glucosamine + H2O = 2-N,3-O-bis[(3R)-3-hydroxytetradecanoyl]-alpha-D-glucosaminyl 1-phosphate + UMP + 2 H(+). Its pathway is glycolipid biosynthesis; lipid IV(A) biosynthesis; lipid IV(A) from (3R)-3-hydroxytetradecanoyl-[acyl-carrier-protein] and UDP-N-acetyl-alpha-D-glucosamine: step 4/6. In terms of biological role, hydrolyzes the pyrophosphate bond of UDP-2,3-diacylglucosamine to yield 2,3-diacylglucosamine 1-phosphate (lipid X) and UMP by catalyzing the attack of water at the alpha-P atom. Involved in the biosynthesis of lipid A, a phosphorylated glycolipid that anchors the lipopolysaccharide to the outer membrane of the cell. This chain is UDP-2,3-diacylglucosamine hydrolase, found in Vibrio parahaemolyticus serotype O3:K6 (strain RIMD 2210633).